The primary structure comprises 262 residues: Adenosylcobinamide-GDP ribazoletransferase (262 aa).

The next 5 helical transmembrane spans lie at 41–61 (AFPL…FILG), 65–85 (ASSL…TGAL), 115–132 (IGTY…LRVS), 134–156 (LAAF…TAAL), and 195–215 (GVLL…AVWL).

It belongs to the CobS family. It depends on Mg(2+) as a cofactor.

It localises to the cell inner membrane. The catalysed reaction is alpha-ribazole + adenosylcob(III)inamide-GDP = adenosylcob(III)alamin + GMP + H(+). The enzyme catalyses alpha-ribazole 5'-phosphate + adenosylcob(III)inamide-GDP = adenosylcob(III)alamin 5'-phosphate + GMP + H(+). It participates in cofactor biosynthesis; adenosylcobalamin biosynthesis; adenosylcobalamin from cob(II)yrinate a,c-diamide: step 7/7. In terms of biological role, joins adenosylcobinamide-GDP and alpha-ribazole to generate adenosylcobalamin (Ado-cobalamin). Also synthesizes adenosylcobalamin 5'-phosphate from adenosylcobinamide-GDP and alpha-ribazole 5'-phosphate. In Rhizobium meliloti (strain 1021) (Ensifer meliloti), this protein is Adenosylcobinamide-GDP ribazoletransferase.